Reading from the N-terminus, the 171-residue chain is UPF0398 protein MGAS10270_Spy1470 (171 aa).

Belongs to the UPF0398 family.

The chain is UPF0398 protein MGAS10270_Spy1470 from Streptococcus pyogenes serotype M2 (strain MGAS10270).